The chain runs to 268 residues: MARLLRLCTWLVALGPGLLATVQAECSQDCAACSYRLVRPGDLNFLACTLECEGQLPSLKIWETCKDLLQVSKQELPQEGASSLRESGKQDESHLLSKKYGGFMKRYGGFMKKVDELYPVEPEEEANGGEILTKRYGGFMKKDAEDGDALANSSDLLKELLGTGDDRDRENHHQEGGDSDEGVSKRYGGFMRGLKRSPQVEDEAKELQKRYGGFMRRVGRPEWWMDYQKRYGGFLKRFAEFLPSDEEGESYSKEVPEMEKRYGGFMRF.

Residues 1–24 (MARLLRLCTWLVALGPGLLATVQA) form the signal peptide. 3 cysteine pairs are disulfide-bonded: cysteine 26/cysteine 48, cysteine 30/cysteine 52, and cysteine 33/cysteine 65. The interval 163-184 (TGDDRDRENHHQEGGDSDEGVS) is disordered. Residues 164 to 176 (GDDRDRENHHQEG) show a composition bias toward basic and acidic residues. 2 consecutive propeptides follow at residues 197 to 208 (SPQVEDEAKELQ) and 218 to 228 (VGRPEWWMDYQ). Phosphoserine is present on serine 252.

This sequence belongs to the opioid neuropeptide precursor family. In terms of processing, proenkephalin-A is cleaved by CTSL to generate Met-enkephalin. Processed and degraded by ACE. Post-translationally, probably cleaved by ACE. In terms of processing, processed by ACE to generate Met-enkephalin in the nucleus accumbens of the brain. The N-terminal domain contains 6 conserved cysteines thought to be involved in disulfide bonding and/or processing.

The protein resides in the cytoplasmic vesicle. It localises to the secretory vesicle. The protein localises to the chromaffin granule lumen. It is found in the secreted. In terms of biological role, neuropeptide that competes with and mimic the effects of opiate drugs. They play a role in a number of physiologic functions, including pain perception and responses to stress. Its function is as follows. Met-enkephalin-Arg-Phe neuropeptide acts as a strong ligand of Mu-type opioid receptor OPRM1. Met-enkephalin-Arg-Phe-binding to OPRM1 in the nucleus accumbens of the brain increases activation of OPRM1, leading to long-term synaptic depression of glutamate release. Increases glutamate release in the striatum and decreases GABA concentration in the striatum. Functionally, increases glutamate release in the striatum. This Cavia porcellus (Guinea pig) protein is Proenkephalin-A (PENK).